Reading from the N-terminus, the 505-residue chain is Glutamate--tRNA ligase (505 aa).

Residues 12 to 22 (PSPTGPLHIGG) carry the 'HIGH' region motif. The 'KMSKS' region signature appears at 260–264 (KLSKR). Lys-263 is a binding site for ATP.

The protein belongs to the class-I aminoacyl-tRNA synthetase family. Glutamate--tRNA ligase type 1 subfamily. As to quaternary structure, monomer.

The protein resides in the cytoplasm. It carries out the reaction tRNA(Glu) + L-glutamate + ATP = L-glutamyl-tRNA(Glu) + AMP + diphosphate. Functionally, catalyzes the attachment of glutamate to tRNA(Glu) in a two-step reaction: glutamate is first activated by ATP to form Glu-AMP and then transferred to the acceptor end of tRNA(Glu). The polypeptide is Glutamate--tRNA ligase (Porphyromonas gingivalis (strain ATCC BAA-308 / W83)).